A 117-amino-acid polypeptide reads, in one-letter code: Large ribosomal subunit protein uL18 (117 aa).

The protein belongs to the universal ribosomal protein uL18 family. Part of the 50S ribosomal subunit; part of the 5S rRNA/L5/L18/L25 subcomplex. Contacts the 5S and 23S rRNAs.

Its function is as follows. This is one of the proteins that bind and probably mediate the attachment of the 5S RNA into the large ribosomal subunit, where it forms part of the central protuberance. In Hydrogenovibrio crunogenus (strain DSM 25203 / XCL-2) (Thiomicrospira crunogena), this protein is Large ribosomal subunit protein uL18.